The following is a 457-amino-acid chain: MELLEKFISQDINNNFLHYLNFKDNGSKKYITNQLIFLEKLFDIPYGNLFLFTKMFDNKVWEIPTNELSEGLVRLFDRLELTKINELAAGNGLLSARLKYYSEKLNTNLKIKTSDGSSKNFGNHEFTYIKVSESDISDFDKSGPIIISWIHRFFEHELLSYVKKHNNEYIFLIGEHPDSTDYGNNHSMYFHNKMYSFGYQHQIIEFQQISQMDYYCYDKIRNDIYNENKTCVVLYYKTHLHSKVTNIINTLKQNHPKLFGKFLNKNKKYYDQDKILLEISKNKINEYFSYCHDDLCLLLTDRYKKLVESSLMDNDDSDSEISHKTIQLSNIIKMMYCGLTKVNLIRPIISCSISNCNSEQSLSRIVRHNENKPTTIILNSVKNNNSVISHSVDDKLSQRYGKKGTIGFSIKRQEYEQENKYTSPFINGSSIPTRMIIRDITERIFAEIMHIKSNINI.

This is an uncharacterized protein from Acanthamoeba polyphaga mimivirus (APMV).